A 99-amino-acid polypeptide reads, in one-letter code: Protein AC150 (99 aa).

Residues G38–A96 form the Chitin-binding type-2 domain. An intrachain disulfide couples C73 to C86.

Its subcellular location is the host nucleus. It is found in the virion. Functionally, plays a role in primary oral infection of the host. This Autographa californica nuclear polyhedrosis virus (AcMNPV) protein is Protein AC150.